The sequence spans 641 residues: Tegument protein UL35 (641 aa).

Disordered stretches follow at residues 353–373, 500–572, and 587–641; these read ERGE…PREA, ASSS…PRQR, and AYSH…LRHL. The span at 358 to 367 shows a compositional bias: acidic residues; the sequence is GDEDEEQEND. Residues 500-563 are compositionally biased toward low complexity; sequence ASSSSASSSS…LSGSHGISSA (64 aa). Basic residues predominate over residues 589-599; the sequence is SHHRRHRRRRS. Residues 632–641 are compositionally biased toward basic and acidic residues; it reads DDLAENLRHL.

This sequence belongs to the herpesviridae pp85 family. As to quaternary structure, interacts with UL82. Interacts with isoform UL35A. Interacts with host UBP7; this interaction significantly inhibits the ability of USP7 to form nuclear bodies. Interacts with host DCAF1 (via C-terminus). Interacts with host SNX5; this interaction allows proper gB localization during viral assembly. Interacts with host TBK1; this interaction prevents type I interferon production. In terms of assembly, interacts with UL82. Interacts with isoform UL35. Interacts with host UBP7; this interaction significantly inhibits the ability of USP7 to form nuclear bodies. Interacts with host SNX5; this interaction allows proper gB localization during viral assembly.

Its subcellular location is the virion tegument. It is found in the host nucleus. The protein resides in the host cytoplasm. Plays important role in immediate-early gene expression through interaction with UL82. Forms nuclear bodies in host nucleus, independently of PML. In turn, UL35 nuclear bodies associate with and remodel PML bodies. Through interaction with host DCAF1, causes cells to accumulate in the G2 phase of the cell cycle by inducing a DNA damage response. Regulates viral assembly by controlling the localization of the essential gB through regulation of a retrograde transport pathway. This modulation occurs via binding and inhibition of host sorting nexin 5/SNX5. Also plays a role in the inhibition of pattern recognition receptor-mediated type I interferon signaling at the level of TBK1. Functionally, promotes cytoplasmic UL82 accumulation and inhibits UL35-containing nuclear bodies formation. Regulates viral assembly by controlling the localization of the essential gB through regulation of a retrograde transport pathway. This modulation occurs via binding and inhibition of host sorting nexin 5/SNX5. In Homo sapiens (Human), this protein is Tegument protein UL35 (UL35).